We begin with the raw amino-acid sequence, 341 residues long: tRNA N6-adenosine threonylcarbamoyltransferase (341 aa).

Fe cation is bound by residues His-115 and His-119. Residues 137–141, Asp-170, Gly-183, Asp-187, and Asn-276 contribute to the substrate site; that span reads IVSGG. Asp-304 serves as a coordination point for Fe cation.

It belongs to the KAE1 / TsaD family. The cofactor is Fe(2+).

It localises to the cytoplasm. It catalyses the reaction L-threonylcarbamoyladenylate + adenosine(37) in tRNA = N(6)-L-threonylcarbamoyladenosine(37) in tRNA + AMP + H(+). Its function is as follows. Required for the formation of a threonylcarbamoyl group on adenosine at position 37 (t(6)A37) in tRNAs that read codons beginning with adenine. Is involved in the transfer of the threonylcarbamoyl moiety of threonylcarbamoyl-AMP (TC-AMP) to the N6 group of A37, together with TsaE and TsaB. TsaD likely plays a direct catalytic role in this reaction. The chain is tRNA N6-adenosine threonylcarbamoyltransferase from Staphylococcus aureus (strain MSSA476).